The primary structure comprises 353 residues: Uroporphyrinogen decarboxylase (353 aa).

Substrate contacts are provided by residues 27 to 31, Phe46, Asp76, Tyr152, Ser207, and His321; that span reads RQAGR.

This sequence belongs to the uroporphyrinogen decarboxylase family. In terms of assembly, homodimer.

It is found in the cytoplasm. The enzyme catalyses uroporphyrinogen III + 4 H(+) = coproporphyrinogen III + 4 CO2. It participates in porphyrin-containing compound metabolism; protoporphyrin-IX biosynthesis; coproporphyrinogen-III from 5-aminolevulinate: step 4/4. Catalyzes the decarboxylation of four acetate groups of uroporphyrinogen-III to yield coproporphyrinogen-III. The protein is Uroporphyrinogen decarboxylase of Listeria monocytogenes serovar 1/2a (strain ATCC BAA-679 / EGD-e).